Reading from the N-terminus, the 198-residue chain is Large ribosomal subunit protein bL12m (198 aa).

The transit peptide at 1 to 36 (MLPAAARPLWGPCLGLRAAAFRLARRQVPCVCAVRH) directs the protein to the mitochondrion. 4 positions are modified to N6-acetyllysine: lysine 125, lysine 138, lysine 142, and lysine 144. Lysine 150 is modified (N6-acetyllysine; alternate). Lysine 150 is subject to N6-succinyllysine; alternate. Lysine 150 is covalently cross-linked (Glycyl lysine isopeptide (Lys-Gly) (interchain with G-Cter in ubiquitin)). Lysine 162 is subject to N6-succinyllysine. N6-acetyllysine is present on residues lysine 163 and lysine 173. Lysine 178 carries the N6-acetyllysine; alternate modification. Lysine 178 carries the N6-succinyllysine; alternate modification. At lysine 185 the chain carries N6-acetyllysine.

It belongs to the bacterial ribosomal protein bL12 family. As to quaternary structure, component of the mitochondrial large ribosomal subunit (mt-LSU). Mature mammalian 55S mitochondrial ribosomes consist of a small (28S) and a large (39S) subunit. The 28S small subunit contains a 12S ribosomal RNA (12S mt-rRNA) and 30 different proteins. The 39S large subunit contains a 16S rRNA (16S mt-rRNA), a copy of mitochondrial valine transfer RNA (mt-tRNA(Val)), which plays an integral structural role, and 52 different proteins. bL12m interacts with NOA1. Post-translationally, two mature forms are produced by differential two-step proteolytic cleavage. Cleaved by the mitochondrial processing protease to produce the long mature form and subsequently by the mitochondrial intermediate protease to produce the short mature form. In the presence of CUL3, undergoes 'Lys-63'-linked ubiquitination at Lys-150 which results in proteasomal degradation.

The protein resides in the mitochondrion matrix. Its function is as follows. As a component of the mitochondrial large ribosomal subunit, plays a role in mitochondrial translation. When present in mitochondria as a free protein not associated with the ribosome, associates with mitochondrial RNA polymerase POLRMT to activate transcription. Required for POLRMT stability. This is Large ribosomal subunit protein bL12m (MRPL12) from Homo sapiens (Human).